Consider the following 299-residue polypeptide: Probable alpha-L-glutamate ligase (299 aa).

The region spanning 112 to 294 is the ATP-grasp domain; the sequence is LQLLTEQGIA…IALQMIVHIE (183 aa). Residues lysine 148, 185-186, aspartate 194, and 218-220 each bind ATP; these read DF and RAN. Residues aspartate 255, glutamate 267, and asparagine 269 each contribute to the Mg(2+) site. Mn(2+) is bound by residues aspartate 255, glutamate 267, and asparagine 269.

This sequence belongs to the RimK family. The cofactor is Mg(2+). It depends on Mn(2+) as a cofactor.

This Histophilus somni (strain 2336) (Haemophilus somnus) protein is Probable alpha-L-glutamate ligase.